We begin with the raw amino-acid sequence, 208 residues long: Proteasome subunit beta 2 (208 aa).

The propeptide at 1-14 (MGNELQLENKILKG) is removed in mature form; by autocatalysis. Residue threonine 15 is the Nucleophile of the active site.

This sequence belongs to the peptidase T1B family. As to quaternary structure, the 20S proteasome core is composed of 14 alpha and 14 beta subunits that assemble into four stacked heptameric rings, resulting in a barrel-shaped structure. The two inner rings, each composed of seven catalytic beta subunits, are sandwiched by two outer rings, each composed of seven alpha subunits. The catalytic chamber with the active sites is on the inside of the barrel. Has a gated structure, the ends of the cylinder being occluded by the N-termini of the alpha-subunits. Is capped at one or both ends by the proteasome regulatory ATPase, PAN.

Its subcellular location is the cytoplasm. It carries out the reaction Cleavage of peptide bonds with very broad specificity.. The formation of the proteasomal ATPase PAN-20S proteasome complex, via the docking of the C-termini of PAN into the intersubunit pockets in the alpha-rings, triggers opening of the gate for substrate entry. Interconversion between the open-gate and close-gate conformations leads to a dynamic regulation of the 20S proteasome proteolysis activity. Its function is as follows. Component of the proteasome core, a large protease complex with broad specificity involved in protein degradation. This chain is Proteasome subunit beta 2, found in Saccharolobus solfataricus (strain ATCC 35092 / DSM 1617 / JCM 11322 / P2) (Sulfolobus solfataricus).